The primary structure comprises 291 residues: Probable cell wall amidase LytH (291 aa).

The first 40 residues, 1–40, serve as a signal peptide directing secretion; it reads MKKIDSWLTKHGLKNRLTLVVIVIFIIFLILLFMFVNLSD. The region spanning 41–105 is the SH3b domain; the sequence is EDTGQITITE…WVAGWHTNLN (65 aa). The region spanning 122-286 is the MurNAc-LAA domain; it reads IVLDPGHGGS…VEQAIVDGLK (165 aa). The segment at 123–147 is disordered; sequence VLDPGHGGSDQGASSSTPSKSLEKN. A compositionally biased stretch (polar residues) spans 133–142; the sequence is QGASSSTPSK.

The protein belongs to the N-acetylmuramoyl-L-alanine amidase 3 family.

It is found in the secreted. In terms of biological role, probably involved in cell-wall metabolism. The sequence is that of Probable cell wall amidase LytH (lytH) from Staphylococcus epidermidis (strain ATCC 35984 / DSM 28319 / BCRC 17069 / CCUG 31568 / BM 3577 / RP62A).